A 436-amino-acid chain; its full sequence is Cytokine receptor-like factor 3 (436 aa).

A coiled-coil region spans residues 9 to 87 (LMQEAWESID…VSAIEQENIK (79 aa)). The region spanning 177-270 (PPVQIEELIE…LQTSRTTLVP (94 aa)) is the Fibronectin type-III domain.

It belongs to the cytokine receptor-like factor 3 family.

The protein resides in the cytoplasm. Its function is as follows. May play a role in the negative regulation of cell cycle progression. In Xenopus laevis (African clawed frog), this protein is Cytokine receptor-like factor 3 (crlf3).